A 122-amino-acid polypeptide reads, in one-letter code: Large ribosomal subunit protein uL14 (122 aa).

The protein belongs to the universal ribosomal protein uL14 family. Part of the 50S ribosomal subunit. Forms a cluster with proteins L3 and L19. In the 70S ribosome, L14 and L19 interact and together make contacts with the 16S rRNA in bridges B5 and B8.

Its function is as follows. Binds to 23S rRNA. Forms part of two intersubunit bridges in the 70S ribosome. This is Large ribosomal subunit protein uL14 from Geobacillus sp. (strain WCH70).